A 413-amino-acid polypeptide reads, in one-letter code: Serine hydroxymethyltransferase (413 aa).

(6S)-5,6,7,8-tetrahydrofolate-binding positions include Leu-117 and 121–123 (GHL). Lys-226 carries the N6-(pyridoxal phosphate)lysine modification. Residues Glu-239 and 349 to 351 (SPF) each bind (6S)-5,6,7,8-tetrahydrofolate.

This sequence belongs to the SHMT family. In terms of assembly, homodimer. It depends on pyridoxal 5'-phosphate as a cofactor.

It localises to the cytoplasm. The catalysed reaction is (6R)-5,10-methylene-5,6,7,8-tetrahydrofolate + glycine + H2O = (6S)-5,6,7,8-tetrahydrofolate + L-serine. Its pathway is one-carbon metabolism; tetrahydrofolate interconversion. It participates in amino-acid biosynthesis; glycine biosynthesis; glycine from L-serine: step 1/1. Its function is as follows. Catalyzes the reversible interconversion of serine and glycine with tetrahydrofolate (THF) serving as the one-carbon carrier. This reaction serves as the major source of one-carbon groups required for the biosynthesis of purines, thymidylate, methionine, and other important biomolecules. Also exhibits THF-independent aldolase activity toward beta-hydroxyamino acids, producing glycine and aldehydes, via a retro-aldol mechanism. The protein is Serine hydroxymethyltransferase of Bacillus cereus (strain G9842).